We begin with the raw amino-acid sequence, 301 residues long: uncharacterized protein (301 aa).

Residues S44 and Y107 each act as charge relay system in the active site. Residue Y133 is the Proton donor of the active site. K162 serves as the catalytic Schiff-base intermediate with substrate.

Belongs to the DapA family. In terms of assembly, homotetramer.

Its subcellular location is the cytoplasm. This is an uncharacterized protein from Pyrobaculum aerophilum (strain ATCC 51768 / DSM 7523 / JCM 9630 / CIP 104966 / NBRC 100827 / IM2).